The primary structure comprises 356 residues: Arginine kinase (356 aa).

Alanine 2 carries the post-translational modification N-acetylalanine. The region spanning 9 to 91 is the Phosphagen kinase N-terminal domain; the sequence is KLEAGFKKLE…FDPIIEDYHV (83 aa). 64 to 68 serves as a coordination point for L-arginine; sequence GVGIY. Positions 119–356 constitute a Phosphagen kinase C-terminal domain; sequence YVISTRVRCG…LELIKMEKEM (238 aa). ATP contacts are provided by residues 122-126 and histidine 185; that span reads STRVR. Glutamate 225 lines the L-arginine pocket. Arginine 229 is a binding site for ATP. Residue cysteine 271 coordinates L-arginine. ATP-binding positions include 280 to 284 and 309 to 314; these read RASVH and RGTRGE. Residue glutamate 314 participates in L-arginine binding.

It belongs to the ATP:guanido phosphotransferase family.

The catalysed reaction is L-arginine + ATP = N(omega)-phospho-L-arginine + ADP + H(+). The polypeptide is Arginine kinase (Penaeus monodon (Giant tiger prawn)).